A 482-amino-acid chain; its full sequence is 3-isopropylmalate dehydratase large subunit (482 aa).

Positions 353, 414, and 417 each coordinate [4Fe-4S] cluster.

The protein belongs to the aconitase/IPM isomerase family. LeuC type 1 subfamily. In terms of assembly, heterodimer of LeuC and LeuD. It depends on [4Fe-4S] cluster as a cofactor.

The catalysed reaction is (2R,3S)-3-isopropylmalate = (2S)-2-isopropylmalate. It participates in amino-acid biosynthesis; L-leucine biosynthesis; L-leucine from 3-methyl-2-oxobutanoate: step 2/4. Its function is as follows. Catalyzes the isomerization between 2-isopropylmalate and 3-isopropylmalate, via the formation of 2-isopropylmaleate. This is 3-isopropylmalate dehydratase large subunit from Xanthomonas oryzae pv. oryzae (strain MAFF 311018).